We begin with the raw amino-acid sequence, 701 residues long: MGHLLSKEPRNRPSQKRPRCCSWCRRRRPLLRLPRRALAKASPQPAAPRSRDCFFRGPCMLCFIVHSPGAPASAGLEEEPPLSPPPPPPRDGAYAAVSSQHLARRYAALAAEDCAAAARRFLLSSAAAAAAAASSPASCCKELGLAAAAAWEQQGRSLFLAGVGPVRFLGPLAAVQLFRAPPAPPPQAEPATALEMVCKRKGAGVPACTPCKQPRCGCGGCGGGGGGGGGPAGGGASPPRPPDAGCCQAPEQPPPPLCPAPASPASECAPIVAAAGDTVRAGGTAPSSAQQQPESGDADCQEPPENPCDCHREPPPEIPDINQLPPSILLKIFSNLSLNERCLSASLVCKYWRDLCLDFQFWKQLDLSSRQQVTDELLEKIASRSQNIIEINISDCRSLSDSGVCVLAFKCPGLLRYTAYRCKQLSDTSIIAVASHCPLLQKVHVGNQDKLTDEGLKQLGSRCRELKDIHFGQCYKISDEGMIVIAKSCLKLQRIYMQENKLVTDQSVKAFAEHCPELQYVGFMGCSVTSKGVIHLTKLRNLSSLDLRHITELDNETVMEIVKRCKNLSSLNLCLNWIINDRCVEVIAKEGQNLKELYLVSCKITDYALIAIGRYSVTIETVDVGWCKEITDQGATLIAQSSKSLRYLGLMRCDKVNELTVEQLVQQYPHITFSTVLQDCKRTLERAYQMGWTPNMSAATS.

Disordered regions lie at residues 73-93, 227-250, and 279-321; these read SAGL…RDGA, GGGG…CQAP, and VRAG…IPDI. Pro residues predominate over residues 81-90; sequence PLSPPPPPPR. Residues 227–236 show a composition bias toward gly residues; it reads GGGGPAGGGA. Residues 285-294 are compositionally biased toward polar residues; sequence APSSAQQQPE. Residues 318–365 enclose the F-box domain; the sequence is IPDINQLPPSILLKIFSNLSLNERCLSASLVCKYWRDLCLDFQFWKQL.

This sequence belongs to the FBXL17 family. Part of the SCF (SKP1-CUL1-F-box) E3 ubiquitin-protein ligase complex SCF(FBXL17) composed of CUL1, SKP1, RBX1 and FBXL17. Interacts with BTB domain-containing proteins such as KLHL12, BCL6 and BACH1; specifically recognizes and binds a conserved degron of non-consecutive residues present at the interface of BTB dimers of aberrant composition. Interacts with SUFU. Interacts with PRMT1.

It localises to the cytoplasm. The protein resides in the nucleus. In terms of biological role, substrate-recognition component of the SCF(FBXL17) E3 ubiquitin ligase complex, a key component of a quality control pathway required to ensure functional dimerization of BTB domain-containing proteins (dimerization quality control, DQC). FBXL17 specifically recognizes and binds a conserved degron of non-consecutive residues present at the interface of BTB dimers of aberrant composition: aberrant BTB dimer are then ubiquitinated by the SCF(FBXL17) complex and degraded by the proteasome. The ability of the SCF(FBXL17) complex to eliminate compromised BTB dimers is required for the differentiation and survival of neural crest and neuronal cells. The SCF(FBXL17) complex mediates ubiquitination and degradation of BACH1. The SCF(FBXL17) complex is also involved in the regulation of the hedgehog/smoothened (Hh) signaling pathway by mediating the ubiquitination and degradation of SUFU, allowing the release of GLI1 from SUFU for proper Hh signal transduction. The SCF(FBXL17) complex mediates ubiquitination and degradation of PRMT1. The chain is F-box/LRR-repeat protein 17 from Mus musculus (Mouse).